A 619-amino-acid polypeptide reads, in one-letter code: Dihydroxy-acid dehydratase 1 (619 aa).

D81 is a binding site for Mg(2+). Residue C122 participates in [2Fe-2S] cluster binding. 2 residues coordinate Mg(2+): D123 and K124. Position 124 is an N6-carboxylysine (K124). Residue C198 coordinates [2Fe-2S] cluster. E494 contacts Mg(2+). The active-site Proton acceptor is the S520.

This sequence belongs to the IlvD/Edd family. As to quaternary structure, homodimer. It depends on [2Fe-2S] cluster as a cofactor. Requires Mg(2+) as cofactor.

The enzyme catalyses (2R)-2,3-dihydroxy-3-methylbutanoate = 3-methyl-2-oxobutanoate + H2O. It catalyses the reaction (2R,3R)-2,3-dihydroxy-3-methylpentanoate = (S)-3-methyl-2-oxopentanoate + H2O. The protein operates within amino-acid biosynthesis; L-isoleucine biosynthesis; L-isoleucine from 2-oxobutanoate: step 3/4. It functions in the pathway amino-acid biosynthesis; L-valine biosynthesis; L-valine from pyruvate: step 3/4. Functionally, functions in the biosynthesis of branched-chain amino acids. Catalyzes the dehydration of (2R,3R)-2,3-dihydroxy-3-methylpentanoate (2,3-dihydroxy-3-methylvalerate) into 2-oxo-3-methylpentanoate (2-oxo-3-methylvalerate) and of (2R)-2,3-dihydroxy-3-methylbutanoate (2,3-dihydroxyisovalerate) into 2-oxo-3-methylbutanoate (2-oxoisovalerate), the penultimate precursor to L-isoleucine and L-valine, respectively. The polypeptide is Dihydroxy-acid dehydratase 1 (Bordetella pertussis (strain Tohama I / ATCC BAA-589 / NCTC 13251)).